The following is an 837-amino-acid chain: Vacuolar membrane protease (837 aa).

The Cytoplasmic portion of the chain corresponds to Met1–Lys36. The helical transmembrane segment at Thr37–Asp57 threads the bilayer. Over Asn58–Arg355 the chain is Vacuolar. A glycan (N-linked (GlcNAc...) asparagine) is linked at Asn143. 2 residues coordinate Zn(2+): His157 and Asp169. Residue Glu201 is the Proton acceptor of the active site. Zn(2+)-binding residues include Glu202, Glu227, and His299. A helical transmembrane segment spans residues Val356–Val376. The Cytoplasmic portion of the chain corresponds to Lys377–Arg384. A helical transmembrane segment spans residues Val385–Gly405. At Asn406–Met415 the chain is on the vacuolar side. Residues Met416 to Val436 form a helical membrane-spanning segment. Residues Asp437–Lys446 lie on the Cytoplasmic side of the membrane. A helical transmembrane segment spans residues Leu447–Ser467. The Vacuolar segment spans residues Gly468–Glu474. A helical transmembrane segment spans residues Phe475 to Trp495. Residues Thr496 to Leu539 are Cytoplasmic-facing. The chain crosses the membrane as a helical span at residues Leu540–Val560. Asn561 carries an N-linked (GlcNAc...) asparagine glycan. At Asn561–His572 the chain is on the vacuolar side. Residues Leu573–Ile593 form a helical membrane-spanning segment. The Cytoplasmic portion of the chain corresponds to Thr594–Arg598. A helical membrane pass occupies residues Tyr599 to His619. Over Pro620–Val837 the chain is Vacuolar. N-linked (GlcNAc...) asparagine glycosylation occurs at Asn689.

It belongs to the peptidase M28 family. Requires Zn(2+) as cofactor.

It localises to the vacuole membrane. Functionally, may be involved in vacuolar sorting and osmoregulation. The polypeptide is Vacuolar membrane protease (Candida albicans (strain SC5314 / ATCC MYA-2876) (Yeast)).